A 1037-amino-acid chain; its full sequence is Probable serine/threonine-protein kinase KCC4 (1037 aa).

The region spanning 21-285 (WKLGETLGFG…IRDILSHPLL (265 aa)) is the Protein kinase domain. Residues 27-35 (LGFGSTGKV) and lysine 50 each bind ATP. Residue aspartate 152 is the Proton acceptor of the active site. Over residues 372–387 (NKKNRNKIKKTKKNKR) the composition is skewed to basic residues. The segment at 372 to 494 (NKKNRNKIKK…MPNTKRSSLT (123 aa)) is disordered. A compositionally biased stretch (low complexity) spans 388–404 (SSTLSSSSSLLLNNRSI). The residue at position 396 (serine 396) is a Phosphoserine. Basic residues predominate over residues 408-427 (PRRRTSKRHSREFSSSRKRS). The span at 453–465 (NVASANTQATPSG) shows a compositional bias: polar residues. The segment covering 469 to 480 (PHKRNSKKRSSK) has biased composition (basic residues). A compositionally biased stretch (low complexity) spans 481–494 (RLSYMPNTKRSSLT). A phosphoserine mark is found at serine 675, serine 707, serine 777, serine 822, serine 825, and serine 871. 3 disordered regions span residues 746–804 (LIKE…DFPQ), 810–829 (QEYD…KSAE), and 861–918 (TLPS…TVKK). The segment covering 861-873 (TLPSLTSNNSSVG) has biased composition (polar residues). Residues 879–888 (GAEKGTESEK) show a composition bias toward basic and acidic residues.

It belongs to the protein kinase superfamily. CAMK Ser/Thr protein kinase family. NIM1 subfamily. Interacts with septin proteins, primarily with CDC11. Interacts with SWE1 and NAP1.

Its subcellular location is the bud neck. It carries out the reaction L-seryl-[protein] + ATP = O-phospho-L-seryl-[protein] + ADP + H(+). The catalysed reaction is L-threonyl-[protein] + ATP = O-phospho-L-threonyl-[protein] + ADP + H(+). Functionally, involved in regulation of bud growth during cell cycle and in septin organization. Plays a role in cell wall synthesis. This is Probable serine/threonine-protein kinase KCC4 (KCC4) from Saccharomyces cerevisiae (strain ATCC 204508 / S288c) (Baker's yeast).